Here is a 121-residue protein sequence, read N- to C-terminus: MITKPNRNELRKRRHLRVRKKVFGTPERPRLNVFRSLKHIYAQIIDDTKGHTLVHASTLDPELRGIAKGANKQSAKLVGELIAKRALEKGIKDVVFDRGGYIYHGVVKELADAARQAGLNF.

The protein belongs to the universal ribosomal protein uL18 family. Part of the 50S ribosomal subunit; part of the 5S rRNA/L5/L18/L25 subcomplex. Contacts the 5S and 23S rRNAs.

This is one of the proteins that bind and probably mediate the attachment of the 5S RNA into the large ribosomal subunit, where it forms part of the central protuberance. The chain is Large ribosomal subunit protein uL18 from Thermoanaerobacter pseudethanolicus (strain ATCC 33223 / 39E) (Clostridium thermohydrosulfuricum).